Consider the following 124-residue polypeptide: Small ribosomal subunit protein uS13 (124 aa).

The disordered stretch occupies residues 98–124 (VRGQRTRCNARTRKGPRKTVGAKRKEK).

This sequence belongs to the universal ribosomal protein uS13 family. In terms of assembly, part of the 30S ribosomal subunit. Forms a loose heterodimer with protein S19. Forms two bridges to the 50S subunit in the 70S ribosome.

Its function is as follows. Located at the top of the head of the 30S subunit, it contacts several helices of the 16S rRNA. In the 70S ribosome it contacts the 23S rRNA (bridge B1a) and protein L5 of the 50S subunit (bridge B1b), connecting the 2 subunits; these bridges are implicated in subunit movement. Contacts the tRNAs in the A and P-sites. This Dictyoglomus turgidum (strain DSM 6724 / Z-1310) protein is Small ribosomal subunit protein uS13.